The sequence spans 76 residues: Large ribosomal subunit protein uL24 (76 aa).

This sequence belongs to the universal ribosomal protein uL24 family. In terms of assembly, part of the 50S ribosomal subunit.

In terms of biological role, one of two assembly initiator proteins, it binds directly to the 5'-end of the 23S rRNA, where it nucleates assembly of the 50S subunit. Its function is as follows. One of the proteins that surrounds the polypeptide exit tunnel on the outside of the subunit. This Wolinella succinogenes (strain ATCC 29543 / DSM 1740 / CCUG 13145 / JCM 31913 / LMG 7466 / NCTC 11488 / FDC 602W) (Vibrio succinogenes) protein is Large ribosomal subunit protein uL24.